The chain runs to 222 residues: Orotate phosphoribosyltransferase (222 aa).

Lys-29 contacts 5-phospho-alpha-D-ribose 1-diphosphate. 37 to 38 contacts orotate; the sequence is FF. Residues 75–76, Arg-101, Lys-102, Lys-105, His-107, and 126–134 each bind 5-phospho-alpha-D-ribose 1-diphosphate; these read YK and DDVISAGTS. Positions 130 and 158 each coordinate orotate.

This sequence belongs to the purine/pyrimidine phosphoribosyltransferase family. PyrE subfamily. Homodimer. It depends on Mg(2+) as a cofactor.

It catalyses the reaction orotidine 5'-phosphate + diphosphate = orotate + 5-phospho-alpha-D-ribose 1-diphosphate. The protein operates within pyrimidine metabolism; UMP biosynthesis via de novo pathway; UMP from orotate: step 1/2. Catalyzes the transfer of a ribosyl phosphate group from 5-phosphoribose 1-diphosphate to orotate, leading to the formation of orotidine monophosphate (OMP). In Polynucleobacter necessarius subsp. necessarius (strain STIR1), this protein is Orotate phosphoribosyltransferase.